We begin with the raw amino-acid sequence, 771 residues long: MSNLRLRLLSLVSILYCIAALRCRPDQTETIKRFKNEFAFSSICRNDTNFFSGVVCDNTTGAVTVLELPGGCLRGTLRPNSSLFELSHLRYLNLSFNNFDSSPLSSAFGQLNNLEVLLLSSNGFTGQVPSSIRNLTKLTQLNLPHNKLTGDLPSLVQNLTKLLALDLSYNQFSGTIPSSFFTMPFLSYLDLSENHLTGSFEISNSSSKLENLNLGNNHFETEIIDPVLRLVNLRYLSLSFLNTSHPIDLSIFSPLQSLTHLDLHGNSLTLTSVYSDIDFPKNMEILLLSGCNISEFPRFLKSLKKLWYLDLSSNRIKGNVPDWIWSLPLLVSLDLSNNSFTGFNGSLDHVLANSSVQVLDIALNSFKGSFPNPPVSIINLSAWNNSFTGDIPLSVCNRTSLDVLDLSYNNFTGSIPPCMGNFTIVNLRKNKLEGNIPDEFYSGALTQTLDVGYNQLTGELPRSLLNCSFIRFLSVDHNRINDSFPLWLKALPNLKVLTLRSNSFHGPMSPPDDQSSLAFPKLQILEISHNRFTGSLPTNYFANWSVKSLKMYDEERLYMGDYSSDRFVYEDTLDLQYKGLYMEQGKVLTFYSAIDFSGNKLEGEIPESIGLLKTLIALNLSNNSFTGHIPMSFANVTELESLDLSGNKLSGEIPQELGRLSYLAYIDVSDNQLTGKIPQGTQIIGQPKSSFEGNSGLCGLPLEESCLREDAPSTQEPEEEEEEILEWRAAAIGYGPGVLFGLAIGHVVALYKPGWFIKNNGQNRLRGIRHP.

The signal sequence occupies residues 1 to 20 (MSNLRLRLLSLVSILYCIAA). Over 21-729 (LRCRPDQTET…EEEEILEWRA (709 aa)) the chain is Extracellular. N-linked (GlcNAc...) asparagine glycosylation is found at asparagine 46, asparagine 58, asparagine 80, asparagine 93, asparagine 134, and asparagine 158. LRR repeat units follow at residues 86 to 110 (LSHL…AFGQ), 112 to 135 (NNLE…IRNL), 136 to 159 (TKLT…VQNL), 160 to 183 (TKLL…FFTM), 185 to 206 (FLSY…SNSS), 207 to 230 (SKLE…VLRL), 232 to 254 (NLRY…IFSP), 255 to 281 (LQSL…DFPK), 283 to 303 (MEIL…LKSL), 304 to 327 (KKLW…IWSL), 329 to 350 (LLVS…LDHV), and 353 to 377 (NSSV…PVSI). N-linked (GlcNAc...) asparagine glycosylation is present at asparagine 204. Residue asparagine 242 is glycosylated (N-linked (GlcNAc...) asparagine). Asparagine 292 carries an N-linked (GlcNAc...) asparagine glycan. Residues asparagine 337, asparagine 344, asparagine 353, asparagine 379, asparagine 384, asparagine 397, asparagine 410, asparagine 421, asparagine 466, and asparagine 481 are each glycosylated (N-linked (GlcNAc...) asparagine). An LRR 13; degenerate repeat occupies 378–397 (INLSAWNNSFTGDIPLSVCN). LRR repeat units lie at residues 398 to 419 (RTSL…PPCM), 420 to 443 (GNFT…FYSG), 445 to 467 (LTQT…LLNC), 469 to 491 (FIRF…LKAL), 492 to 516 (PNLK…DQSS), 519 to 543 (FPKL…YFAN), 588 to 612 (LTFY…IGLL), 613 to 636 (KTLI…FANV), 637 to 660 (TELE…LGRL), and 662 to 685 (YLAY…QIIG). N-linked (GlcNAc...) asparagine glycosylation occurs at asparagine 543. N-linked (GlcNAc...) asparagine glycosylation is found at asparagine 619, asparagine 622, and asparagine 635. A helical membrane pass occupies residues 730-750 (AAIGYGPGVLFGLAIGHVVAL). The Cytoplasmic portion of the chain corresponds to 751–771 (YKPGWFIKNNGQNRLRGIRHP).

The protein belongs to the RLP family.

The protein localises to the cell membrane. The protein is Receptor like protein 22 of Arabidopsis thaliana (Mouse-ear cress).